A 392-amino-acid chain; its full sequence is Elongation factor Tu (392 aa).

The region spanning 10–202 (KVHVNVGTIG…VLDEYIEDPI (193 aa)) is the tr-type G domain. The interval 19–26 (GHVDHGKT) is G1. 19-26 (GHVDHGKT) contacts GTP. Residue T26 participates in Mg(2+) binding. Residues 60–64 (GITIN) form a G2 region. Positions 81 to 84 (DCPG) are G3. GTP is bound by residues 81–85 (DCPGH) and 136–139 (NKCD). Residues 136–139 (NKCD) are G4. A G5 region spans residues 174-176 (SAL).

This sequence belongs to the TRAFAC class translation factor GTPase superfamily. Classic translation factor GTPase family. EF-Tu/EF-1A subfamily. As to quaternary structure, monomer.

The protein resides in the cytoplasm. The catalysed reaction is GTP + H2O = GDP + phosphate + H(+). In terms of biological role, GTP hydrolase that promotes the GTP-dependent binding of aminoacyl-tRNA to the A-site of ribosomes during protein biosynthesis. The polypeptide is Elongation factor Tu (Apple proliferation phytoplasma).